The following is a 768-amino-acid chain: MADRDKNDIRKRLEELRKDNNRRNNRQDNGNRSPFSGFLFFIFVILLFTFTLLFHRDIQTYFQEKREISYTEFVSKTQKGDFSEINEKDDKLISQVKENGKDVLYYTKKITDRVGDEPNIISAIGQKKVKLNSLQPSGGGFFLLLLGQFLPMIIMIGLMVYLAKKMVGGSQGGGPGNIFGFGKSRVNKIDKKPDVKFDDVAGVDGAKEELREVVDFLKNPEKYTKAGARVPKGVLLLGRPGTGKTLLAKAVAGESGASFFSISGSEFVEMFVGVGASRVRDLFEKAKESSPSIIFIDEIDAIGRRRSVGKNSGSNDEREQTLNQLLVEMDGFETDTKVIVLAATNREDVLDPALLRAGRFDRRVTVDAPDLQGRIAILKVHSRNKKLARDVKLEDIAKITPGFVGADLANLLNEAAILAARRASDTIKMADLDEAVDKIGMGLGQKGKIIKPEEKKLLAYHEAGHAIMTELTPGADPVHKVTIIPRGDAGGFMMPLPEEKLVTTSRQMLAEIKVLFGGRAAEEIGLEDVSTGAYSDIKRATKVARAYVESVGMSKKLGPINFENSDDEYSFTPNKSDETVREIDLEIRKILTEEYFNTLNTLQDNWEKLEQVVELLLKKETITGDEVRRIIAGEKAEDILKGTEVKEESIQKGSEGIVQTSENSIEESQENKTVEAEVHDSNLKSDTEKLAEAVREITGETGGVLEPTEKNDFDKDSDDNEKNDDDNENSDDSSKNDSDSDDENENSDNKSEKNKKRKSNFKLPSFME.

Residues 1–33 (MADRDKNDIRKRLEELRKDNNRRNNRQDNGNRS) are Cytoplasmic-facing. A helical transmembrane segment spans residues 34–54 (PFSGFLFFIFVILLFTFTLLF). Over 55–139 (HRDIQTYFQE…KLNSLQPSGG (85 aa)) the chain is Periplasmic. The chain crosses the membrane as a helical span at residues 140–160 (GFFLLLLGQFLPMIIMIGLMV). At 161-768 (YLAKKMVGGS…SNFKLPSFME (608 aa)) the chain is on the cytoplasmic side. 238 to 245 (GRPGTGKT) contacts ATP. His-461 provides a ligand contact to Zn(2+). Glu-462 is a catalytic residue. Residues His-465 and Asp-536 each contribute to the Zn(2+) site. Residues 647–768 (EESIQKGSEG…SNFKLPSFME (122 aa)) form a disordered region. A compositionally biased stretch (basic and acidic residues) spans 669–698 (QENKTVEAEVHDSNLKSDTEKLAEAVREIT). Positions 715-731 (KDSDDNEKNDDDNENSD) are enriched in acidic residues.

The protein in the central section; belongs to the AAA ATPase family. This sequence in the C-terminal section; belongs to the peptidase M41 family. As to quaternary structure, homohexamer. Zn(2+) is required as a cofactor.

The protein localises to the cell inner membrane. Its function is as follows. Acts as a processive, ATP-dependent zinc metallopeptidase for both cytoplasmic and membrane proteins. Plays a role in the quality control of integral membrane proteins. This Leptotrichia buccalis (strain ATCC 14201 / DSM 1135 / JCM 12969 / NCTC 10249 / C-1013-b) protein is ATP-dependent zinc metalloprotease FtsH.